Here is a 508-residue protein sequence, read N- to C-terminus: MPGVVSWSQLVNPSYVAILPHLIVTATLLVVIVLDAYFKEKRSLVWVTLGGVVLAMLSIWYTASDPQIQAGIAAGRPPEFWGGMIIADGFTFFMNGVLLGIAALVILLSADYVGKFLRGAHMEFYEIILAVTLGMMFMVSSRDLLTIYIGLELTSISSYVLAGILRKDAKSNEAALKYFLTGATASAVLLFGLSLIYGVTGSTRLPEVAAALAGGSHVVAAAGPALTPLLVAGMAFLMVGFGFKVAAVPVHQWAPDVYEGAPTPVTAFFSAGPKGAAMAAILRVFVGGLGVAPFTDKWALIWALAAAASMTVGNLVALQQTNIKRMMAYSSIAQAGYILVGVAASGLQSVEGISSVLFYVMAYAVTNLGIFAVLTHMDQEGGWVEVDNYAGLAKRNPLYAWALLLFFVSLIGIPPTVGFLGKFFLFRAAAASGYLWLAVLMAVNSVISVGYYYRVVKVMFLDQSDYPALTPSTGISATVLLSLLGVVALTIFANPFVQWTAQSAALLH.

Helical transmembrane passes span 14-34 (SYVA…VIVL), 43-63 (SLVW…WYTA), 90-110 (FTFF…LLSA), 119-139 (GAHM…MFMV), 144-164 (LLTI…LAGI), 179-199 (FLTG…IYGV), 223-243 (GPAL…GFGF), 275-295 (GAAM…APFT), 298-318 (WALI…LVAL), 327-347 (MAYS…ASGL), 353-373 (ISSV…IFAV), 400-420 (AWAL…VGFL), 433-455 (GYLW…YYRV), and 473-493 (TGIS…TIFA).

The protein belongs to the complex I subunit 2 family. NDH-1 is composed of 14 different subunits. Subunits NuoA, H, J, K, L, M, N constitute the membrane sector of the complex.

It localises to the cell membrane. The enzyme catalyses a quinone + NADH + 5 H(+)(in) = a quinol + NAD(+) + 4 H(+)(out). Its function is as follows. NDH-1 shuttles electrons from NADH, via FMN and iron-sulfur (Fe-S) centers, to quinones in the respiratory chain. The immediate electron acceptor for the enzyme in this species is believed to be a menaquinone. Couples the redox reaction to proton translocation (for every two electrons transferred, four hydrogen ions are translocated across the cytoplasmic membrane), and thus conserves the redox energy in a proton gradient. The protein is NADH-quinone oxidoreductase subunit N 2 of Symbiobacterium thermophilum (strain DSM 24528 / JCM 14929 / IAM 14863 / T).